A 229-amino-acid polypeptide reads, in one-letter code: Ribose-5-phosphate isomerase A (229 aa).

Substrate is bound by residues 28–31 (TGST), 85–88 (DGAD), and 98–101 (KGRG). Glutamate 107 acts as the Proton acceptor in catalysis. Residue lysine 125 participates in substrate binding.

Belongs to the ribose 5-phosphate isomerase family. Homotetramer.

It catalyses the reaction aldehydo-D-ribose 5-phosphate = D-ribulose 5-phosphate. Its pathway is carbohydrate degradation; pentose phosphate pathway; D-ribose 5-phosphate from D-ribulose 5-phosphate (non-oxidative stage): step 1/1. Inhibited by D-4-phosphoerythronic acid. Functionally, involved in the first step of the non-oxidative branch of the pentose phosphate pathway. It catalyzes the reversible conversion of ribose-5-phosphate to ribulose 5-phosphate. The sequence is that of Ribose-5-phosphate isomerase A from Pyrococcus horikoshii (strain ATCC 700860 / DSM 12428 / JCM 9974 / NBRC 100139 / OT-3).